A 247-amino-acid chain; its full sequence is UPF0246 protein CD630_18230 (247 aa).

The protein belongs to the UPF0246 family.

The sequence is that of UPF0246 protein CD630_18230 from Clostridioides difficile (strain 630) (Peptoclostridium difficile).